Consider the following 85-residue polypeptide: Putative membrane protein insertion efficiency factor (85 aa).

Belongs to the UPF0161 family.

The protein localises to the cell inner membrane. Its function is as follows. Could be involved in insertion of integral membrane proteins into the membrane. The polypeptide is Putative membrane protein insertion efficiency factor (Serratia proteamaculans (strain 568)).